A 277-amino-acid chain; its full sequence is Acyl-coenzyme A thioesterase MBLAC2 (277 aa).

Zn(2+)-binding residues include histidine 80, histidine 82, aspartate 84, histidine 85, histidine 167, aspartate 186, and histidine 228.

The protein belongs to the metallo-beta-lactamase superfamily. Glyoxalase II family. Zn(2+) serves as cofactor.

Its subcellular location is the endoplasmic reticulum membrane. It localises to the cell membrane. It catalyses the reaction hexadecanoyl-CoA + H2O = hexadecanoate + CoA + H(+). It carries out the reaction dodecanoyl-CoA + H2O = dodecanoate + CoA + H(+). The enzyme catalyses tetradecanoyl-CoA + H2O = tetradecanoate + CoA + H(+). The catalysed reaction is octadecanoyl-CoA + H2O = octadecanoate + CoA + H(+). It catalyses the reaction a beta-lactam + H2O = a substituted beta-amino acid. Functionally, acyl-CoA thioesterases are a group of enzymes that catalyze the hydrolysis of acyl-CoAs to the free fatty acid and coenzyme A (CoASH), providing the potential to regulate intracellular levels of acyl-CoAs, free fatty acids and CoASH. Has an acyl-CoA thioesterase activity towards the long chain fatty acyl-CoA thioester palmitoyl-CoA (hexadecanoyl-CoA; C16:0-CoA). Displays a substrate preference for fatty acyl-CoAs with chain-lengths C12-C18. The polypeptide is Acyl-coenzyme A thioesterase MBLAC2 (MBLAC2) (Gallus gallus (Chicken)).